Reading from the N-terminus, the 317-residue chain is COP9 signalosome complex subunit 6a (317 aa).

The 135-residue stretch at 30 to 164 folds into the MPN domain; the sequence is TQLNPPASIC…VTIYESELHV (135 aa).

The protein belongs to the peptidase M67A family. CSN6 subfamily. In terms of assembly, component of the CSN complex, probably composed of CSN1, CSN2, CSN3, CSN4, CSN5 (CSN5A or CSN5B), CSN6 (CSN6A or CSN6B), CSN7 and CSN8. Interacts with itself. In the complex, it probably interacts directly with CSN4 and CSN5A or CSN5B. Interacts with CSN7 (via C-terminal tail). Binds to the translation initiation factors TIF3E1.

Its subcellular location is the cytoplasm. It localises to the nucleus. Functionally, component of the COP9 signalosome complex (CSN), a complex involved in various cellular and developmental processes such as photomorphogenesis and auxin and jasmonate responses. The CSN complex is an essential regulator of the ubiquitin (Ubl) conjugation pathway by mediating the deneddylation of the cullin subunits of SCF-type E3 ligase complexes, leading to decrease the Ubl ligase activity of SCF. It is involved in repression of photomorphogenesis in darkness by regulating the activity of COP1-containing Ubl ligase complexes. The complex is also required for degradation of PSIAA6 by regulating the activity of the Ubl ligase SCF-TIR complex. Essential for the structural integrity of the CSN holocomplex. This is COP9 signalosome complex subunit 6a from Arabidopsis thaliana (Mouse-ear cress).